Consider the following 277-residue polypeptide: Undecaprenyl-diphosphatase (277 aa).

7 helical membrane passes run 3–23, 44–64, 82–102, 109–129, 189–209, 218–238, and 253–273; these read IALL…EFLP, AKVF…LVYW, QFAL…LLFG, LFTP…ILWA, TDFS…YSLF, ADAP…WLCI, and FAWY…SGVV.

Belongs to the UppP family.

The protein localises to the cell inner membrane. It carries out the reaction di-trans,octa-cis-undecaprenyl diphosphate + H2O = di-trans,octa-cis-undecaprenyl phosphate + phosphate + H(+). In terms of biological role, catalyzes the dephosphorylation of undecaprenyl diphosphate (UPP). Confers resistance to bacitracin. The protein is Undecaprenyl-diphosphatase of Polaromonas naphthalenivorans (strain CJ2).